We begin with the raw amino-acid sequence, 127 residues long: Glycine cleavage system H protein (127 aa).

Residues 24–105 enclose the Lipoyl-binding domain; sequence AALVGITDFA…YGEGWLVKIR (82 aa). Lys65 bears the N6-lipoyllysine mark.

Belongs to the GcvH family. In terms of assembly, the glycine cleavage system is composed of four proteins: P, T, L and H. The cofactor is (R)-lipoate.

Its function is as follows. The glycine cleavage system catalyzes the degradation of glycine. The H protein shuttles the methylamine group of glycine from the P protein to the T protein. In Chlorobium limicola (strain DSM 245 / NBRC 103803 / 6330), this protein is Glycine cleavage system H protein.